A 392-amino-acid polypeptide reads, in one-letter code: Bifunctional enzyme Fae/Hps (392 aa).

The formaldehyde-activating enzyme stretch occupies residues 1-161 (MFQIGEALMG…EESNKSTHAI (161 aa)). Catalysis depends on H17, which acts as the Proton donor. Substrate contacts are provided by D19, L48, K66, T68, and Q83. The interval 162-392 (MGFKVTRLWD…IDQFRVMTDF (231 aa)) is 3-hexulose-6-phosphate synthase.

In the N-terminal section; belongs to the formaldehyde-activating enzyme family. It in the C-terminal section; belongs to the HPS/KGPDC family. HPS subfamily.

It carries out the reaction 5,6,7,8-tetrahydromethanopterin + formaldehyde = 5,10-methylenetetrahydromethanopterin + H2O. It catalyses the reaction D-ribulose 5-phosphate + formaldehyde = D-arabino-hex-3-ulose 6-phosphate. Its pathway is carbohydrate biosynthesis; D-ribose 5-phosphate biosynthesis. Its function is as follows. Catalyzes the condensation of formaldehyde with tetrahydromethanopterin (H(4)MPT) to 5,10-methylenetetrahydromethanopterin. Functionally, catalyzes the reversible formation of ribulose-5-phosphate and formaldehyde from 3-hexulose-6-phosphate. This is Bifunctional enzyme Fae/Hps from Methanosarcina mazei (strain ATCC BAA-159 / DSM 3647 / Goe1 / Go1 / JCM 11833 / OCM 88) (Methanosarcina frisia).